Consider the following 81-residue polypeptide: U17-lycotoxin-Ls1a (81 aa).

An N-terminal signal peptide occupies residues 1–22; sequence MSSKVQAVLLLVGVITFLAVHA. A propeptide spanning residues 23 to 34 is cleaved from the precursor; the sequence is QEELSENTESER. Disulfide bonds link Cys36–Cys51, Cys50–Cys67, and Cys58–Cys65.

Belongs to the neurotoxin 02 (plectoxin) family. In terms of tissue distribution, expressed by the venom gland.

Its subcellular location is the secreted. The protein is U17-lycotoxin-Ls1a of Lycosa singoriensis (Wolf spider).